Reading from the N-terminus, the 209-residue chain is Holliday junction branch migration complex subunit RuvA (209 aa).

Residues 1-70 (MINYLKGKTT…EDQQILYGFS (70 aa)) form a domain I region. Residues 71 to 149 (TDSERDLFRQ…QWEQAIALKT (79 aa)) are domain II. Positions 150–160 (PVSVGVPSREI) are flexible linker. The tract at residues 160 to 209 (ILEEVEMTLLALGYTDEEIDQAISAISQDNLLLKNPHVEEWLKSAIAWLS) is domain III.

Belongs to the RuvA family. As to quaternary structure, homotetramer. Forms an RuvA(8)-RuvB(12)-Holliday junction (HJ) complex. HJ DNA is sandwiched between 2 RuvA tetramers; dsDNA enters through RuvA and exits via RuvB. An RuvB hexamer assembles on each DNA strand where it exits the tetramer. Each RuvB hexamer is contacted by two RuvA subunits (via domain III) on 2 adjacent RuvB subunits; this complex drives branch migration. In the full resolvosome a probable DNA-RuvA(4)-RuvB(12)-RuvC(2) complex forms which resolves the HJ.

The protein resides in the cytoplasm. Functionally, the RuvA-RuvB-RuvC complex processes Holliday junction (HJ) DNA during genetic recombination and DNA repair, while the RuvA-RuvB complex plays an important role in the rescue of blocked DNA replication forks via replication fork reversal (RFR). RuvA specifically binds to HJ cruciform DNA, conferring on it an open structure. The RuvB hexamer acts as an ATP-dependent pump, pulling dsDNA into and through the RuvAB complex. HJ branch migration allows RuvC to scan DNA until it finds its consensus sequence, where it cleaves and resolves the cruciform DNA. The polypeptide is Holliday junction branch migration complex subunit RuvA (Gloeothece citriformis (strain PCC 7424) (Cyanothece sp. (strain PCC 7424))).